A 542-amino-acid chain; its full sequence is Adenosylmethionine-8-amino-7-oxononanoate aminotransferase (542 aa).

170–171 (GS) contributes to the pyridoxal 5'-phosphate binding site. Residue Tyr-205 participates in substrate binding. Asp-311 lines the pyridoxal 5'-phosphate pocket. Substrate-binding residues include Lys-340, Gly-375, and Arg-470. Lys-340 is modified (N6-(pyridoxal phosphate)lysine). The tract at residues 509–542 (DGGLWTKRPDGPDNPDKANTPDTPDGARTGETVV) is disordered. Basic and acidic residues predominate over residues 515-524 (KRPDGPDNPD).

Belongs to the class-III pyridoxal-phosphate-dependent aminotransferase family. BioA subfamily. In terms of assembly, homodimer. Pyridoxal 5'-phosphate serves as cofactor.

It localises to the cytoplasm. The enzyme catalyses (8S)-8-amino-7-oxononanoate + S-adenosyl-L-methionine = S-adenosyl-4-methylsulfanyl-2-oxobutanoate + (7R,8S)-7,8-diammoniononanoate. It participates in cofactor biosynthesis; biotin biosynthesis; 7,8-diaminononanoate from 8-amino-7-oxononanoate (SAM route): step 1/1. Catalyzes the transfer of the alpha-amino group from S-adenosyl-L-methionine (SAM) to 7-keto-8-aminopelargonic acid (KAPA) to form 7,8-diaminopelargonic acid (DAPA). It is the only aminotransferase known to utilize SAM as an amino donor. The protein is Adenosylmethionine-8-amino-7-oxononanoate aminotransferase of Nitratidesulfovibrio vulgaris (strain ATCC 29579 / DSM 644 / CCUG 34227 / NCIMB 8303 / VKM B-1760 / Hildenborough) (Desulfovibrio vulgaris).